The following is a 190-amino-acid chain: Recombination protein RecR (190 aa).

The C4-type zinc-finger motif lies at 58-73 (CEQCGALSENELCEIC). A Toprim domain is found at 81 to 167 (NILCIVESPK…TFSKIAQGIP (87 aa)).

The protein belongs to the RecR family.

In terms of biological role, may play a role in DNA repair. It seems to be involved in an RecBC-independent recombinational process of DNA repair. It may act with RecF and RecO. In Campylobacter jejuni subsp. doylei (strain ATCC BAA-1458 / RM4099 / 269.97), this protein is Recombination protein RecR.